Reading from the N-terminus, the 365-residue chain is tRNA(Met) cytidine acetate ligase (365 aa).

Residues 7 to 20 (IAEF…HKYL), glycine 96, asparagine 152, and arginine 175 each bind ATP.

The protein belongs to the TmcAL family.

It is found in the cytoplasm. It catalyses the reaction cytidine(34) in elongator tRNA(Met) + acetate + ATP = N(4)-acetylcytidine(34) in elongator tRNA(Met) + AMP + diphosphate. In terms of biological role, catalyzes the formation of N(4)-acetylcytidine (ac(4)C) at the wobble position of elongator tRNA(Met), using acetate and ATP as substrates. First activates an acetate ion to form acetyladenylate (Ac-AMP) and then transfers the acetyl group to tRNA to form ac(4)C34. The sequence is that of tRNA(Met) cytidine acetate ligase from Streptococcus pneumoniae (strain 70585).